We begin with the raw amino-acid sequence, 129 residues long: Small ribosomal subunit protein uS11 (129 aa).

Belongs to the universal ribosomal protein uS11 family. In terms of assembly, part of the 30S ribosomal subunit. Interacts with proteins S7 and S18. Binds to IF-3.

Functionally, located on the platform of the 30S subunit, it bridges several disparate RNA helices of the 16S rRNA. Forms part of the Shine-Dalgarno cleft in the 70S ribosome. The protein is Small ribosomal subunit protein uS11 of Enterobacter sp. (strain 638).